Here is a 172-residue protein sequence, read N- to C-terminus: Adenine phosphoribosyltransferase (172 aa).

It belongs to the purine/pyrimidine phosphoribosyltransferase family. Homodimer.

The protein resides in the cytoplasm. The catalysed reaction is AMP + diphosphate = 5-phospho-alpha-D-ribose 1-diphosphate + adenine. It functions in the pathway purine metabolism; AMP biosynthesis via salvage pathway; AMP from adenine: step 1/1. Its function is as follows. Catalyzes a salvage reaction resulting in the formation of AMP, that is energically less costly than de novo synthesis. The polypeptide is Adenine phosphoribosyltransferase (Ligilactobacillus salivarius (strain UCC118) (Lactobacillus salivarius)).